Here is a 278-residue protein sequence, read N- to C-terminus: Digeranylgeranylglyceryl phosphate synthase (278 aa).

8 consecutive transmembrane segments (helical) span residues 17–37, 40–60, 91–111, 129–149, 153–173, 204–224, 226–246, and 257–277; these read MASF…LEMV, LIFA…LNDI, LLVF…LMAV, IIGN…GGIA, IDVT…REII, LLLV…FFGI, YLIS…PLLI, and SRNI…GSFF.

Belongs to the UbiA prenyltransferase family. DGGGP synthase subfamily. Mg(2+) serves as cofactor.

Its subcellular location is the cell membrane. The enzyme catalyses sn-3-O-(geranylgeranyl)glycerol 1-phosphate + (2E,6E,10E)-geranylgeranyl diphosphate = 2,3-bis-O-(geranylgeranyl)-sn-glycerol 1-phosphate + diphosphate. Its pathway is membrane lipid metabolism; glycerophospholipid metabolism. Its function is as follows. Prenyltransferase that catalyzes the transfer of the geranylgeranyl moiety of geranylgeranyl diphosphate (GGPP) to the C2 hydroxyl of (S)-3-O-geranylgeranylglyceryl phosphate (GGGP). This reaction is the second ether-bond-formation step in the biosynthesis of archaeal membrane lipids. In Methanococcus maripaludis (strain C5 / ATCC BAA-1333), this protein is Digeranylgeranylglyceryl phosphate synthase.